The chain runs to 415 residues: Gamma-glutamyl phosphate reductase (415 aa).

It belongs to the gamma-glutamyl phosphate reductase family.

Its subcellular location is the cytoplasm. The enzyme catalyses L-glutamate 5-semialdehyde + phosphate + NADP(+) = L-glutamyl 5-phosphate + NADPH + H(+). It participates in amino-acid biosynthesis; L-proline biosynthesis; L-glutamate 5-semialdehyde from L-glutamate: step 2/2. Functionally, catalyzes the NADPH-dependent reduction of L-glutamate 5-phosphate into L-glutamate 5-semialdehyde and phosphate. The product spontaneously undergoes cyclization to form 1-pyrroline-5-carboxylate. This chain is Gamma-glutamyl phosphate reductase, found in Lachnospira eligens (strain ATCC 27750 / DSM 3376 / VPI C15-48 / C15-B4) (Eubacterium eligens).